We begin with the raw amino-acid sequence, 88 residues long: Snakin-1 (88 aa).

Residues 1 to 25 (MKLFLLTLLLVTLVITPSLIQTTMA) form the signal peptide.

It belongs to the GASA family. Six disulfide bonds may be present. Expressed in tubers, stems, axillary and young floral buds, sepals, petals, stamens and carpels, but not in roots, stolons, shoot apex meristem or young leaves.

It localises to the secreted. It is found in the cell wall. In terms of biological role, has an antimicrobial activity. Causes a rapid aggregation of both Gram-positive and Gram-negative bacteria, but the antimicrobial activity is not correlated with the capacity to aggregate bacteria. The polypeptide is Snakin-1 (SN1) (Solanum tuberosum (Potato)).